The primary structure comprises 481 residues: MASGALRGLAVAGGGESSDSEDDGWEIGYLDRVSQKLKGPLPGEEKSETFKKALTTGDISLVQELLDSGISVDSSFRYGWTPLMYAASIANVELVRVLLNRGANASFDKDKQTILITACSARGSEEQILKCVELLLSRNADPNIACRRLMTPIMYAARDGHPQVVALLVAHGAEVNAQDENGYTALTWAARQGHKNVVLKLLELGANKMLQTKDGKIPSEIAKRNKHLEIFNFLSLTLNPLEGNLKQLTKEETICKLLTTDSDKEKDHIFSSYTAFGDLEIFLHGLGLEHMTDLLKEKDITLRHLLTMRKDEFTKNGITSKDQEKILSALKELEVEEIKFGELPEVAKLEISGDEFLNFLLKLNKQCGHLITAVQNIITELPVNSHKIVLEWASPRNFTSVCEELVSNVEDLSEEVHKLKDLIQKLQNERENDPTHIPLMEEVSTWNSRILKRTAIAVCGFGFLLFICKLTVQRRYPNICF.

Positions 1 to 10 (MASGALRGLA) are enriched in low complexity. Positions 1–23 (MASGALRGLAVAGGGESSDSEDD) are disordered. A phosphoserine mark is found at S17, S18, and S20. ANK repeat units follow at residues 45–74 (EKSE…SVDS), 78–107 (YGWT…NASF), 110–144 (DKQT…DPNI), 148–177 (RLMT…EVNA), 181–210 (NGYT…NKML), and 214–243 (DGKI…PLEG). The 63-residue stretch at 272–334 (SYTAFGDLEI…KILSALKELE (63 aa)) folds into the SAM domain.

As to quaternary structure, interacts with DDX4, PIWIL1, RANBP9 and TDRD1.

It is found in the cytoplasm. Its function is as follows. Plays a central role during spermatogenesis by repressing transposable elements and preventing their mobilization, which is essential for the germline integrity. Acts via the piRNA metabolic process, which mediates the repression of transposable elements during meiosis by forming complexes composed of piRNAs and Piwi proteins and governs the methylation and subsequent repression of transposons. Its association with pi-bodies suggests a participation in the primary piRNAs metabolic process. Required prior to the pachytene stage to facilitate the production of multiple types of piRNAs, including those associated with repeats involved in the regulation of retrotransposons. May act by mediating protein-protein interactions during germ cell maturation. In Eulemur macaco macaco (Black lemur), this protein is Ankyrin repeat, SAM and basic leucine zipper domain-containing protein 1 (ASZ1).